The sequence spans 159 residues: Ribosome maturation factor RimP (159 aa).

The protein belongs to the RimP family.

It localises to the cytoplasm. In terms of biological role, required for maturation of 30S ribosomal subunits. The protein is Ribosome maturation factor RimP of Geobacter metallireducens (strain ATCC 53774 / DSM 7210 / GS-15).